The chain runs to 310 residues: MSEDAVKNAILIAGPTASGKSALAIRMAKATGGFIVNTDSMQVYGVLDLLTARPSRADLAEAEHFLYGHVPPSSTYSTGKWFEDVEALLGRCELQGRVPIFVGGTGLYFRALLGGLSQMPEVSAQVRDHWRGRMEAEGAKALHAVLCVRDPAIAAALQPSDSQRIVRALEVLESTGKSLLEWQKVKGRALVDDQSAQKIVLRPDRAWLGERIARRFSAMWAEGAIDEVRALLALDLDPALPAMKAIGVREVSAFLAETMSREEAIERSVIATRQYAKRQSTWFRNQLGEDWRVYASGEEVFQGGSFRDPQ.

Gly-14–Ser-21 is a binding site for ATP. Thr-16–Ser-21 serves as a coordination point for substrate. Interaction with substrate tRNA regions lie at residues Asp-39–Gln-42 and Gln-163–Arg-167.

This sequence belongs to the IPP transferase family. Monomer. It depends on Mg(2+) as a cofactor.

It catalyses the reaction adenosine(37) in tRNA + dimethylallyl diphosphate = N(6)-dimethylallyladenosine(37) in tRNA + diphosphate. Its function is as follows. Catalyzes the transfer of a dimethylallyl group onto the adenine at position 37 in tRNAs that read codons beginning with uridine, leading to the formation of N6-(dimethylallyl)adenosine (i(6)A). The polypeptide is tRNA dimethylallyltransferase (Brucella ovis (strain ATCC 25840 / 63/290 / NCTC 10512)).